The primary structure comprises 160 residues: Cyanate hydratase (160 aa).

Active-site residues include R100, E103, and S126.

Belongs to the cyanase family.

It catalyses the reaction cyanate + hydrogencarbonate + 3 H(+) = NH4(+) + 2 CO2. Its function is as follows. Catalyzes the reaction of cyanate with bicarbonate to produce ammonia and carbon dioxide. The sequence is that of Cyanate hydratase from Aspergillus niger (strain ATCC MYA-4892 / CBS 513.88 / FGSC A1513).